Here is a 526-residue protein sequence, read N- to C-terminus: MTGGGFATSANGVEFEAKITPIVIISCIMAATGGLMFGYDVGVSGGVTSMPDFLEKFFPVVYRKVVAGADKDSNYCKYDNQGLQLFTSSLYLAGLTATFFASYTTRTLGRRLTMLIAGVFFIIGVALNAGAQDLAMLIAGRILLGCGVGFANQAVPLFLSEIAPTRIRGGLNILFQLNVTIGILFANLVNYGTAKIKGGWGWRLSLGLAGIPALLLTVGALLVTETPNSLVERGRLDEGKAVLRRIRGTDNVEPEFADLLEASRLAKEVKHPFRNLLQRRNRPQLVIAVALQIFQQCTGINAIMFYAPVLFSTLGFGSDASLYSAVVTGAVNVLSTLVSIYSVDKVGRRVLLLEAGVQMFFSQVVIAIILGVKVTDTSTNLSKGFAILVVVMICTYVAAFAWSWGPLGWLIPSETFPLETRSAGQSVTVCVNLLFTFIIAQAFLSMLCHFKFGIFIFFSAWVLIMSVFVMFLLPETKNIPIEEMTERVWKKHWFWARFMDDHNDHEFVNGEKSNGKSNGFDPSTRL.

Residues 1 to 18 (MTGGGFATSANGVEFEAK) lie on the Cytoplasmic side of the membrane. The chain crosses the membrane as a helical span at residues 19–39 (ITPIVIISCIMAATGGLMFGY). The Extracellular portion of the chain corresponds to 40 to 81 (DVGVSGGVTSMPDFLEKFFPVVYRKVVAGADKDSNYCKYDNQ). A helical membrane pass occupies residues 82-102 (GLQLFTSSLYLAGLTATFFAS). Topologically, residues 103–111 (YTTRTLGRR) are cytoplasmic. The helical transmembrane segment at 112–132 (LTMLIAGVFFIIGVALNAGAQ) threads the bilayer. Topologically, residues 133–141 (DLAMLIAGR) are extracellular. A helical membrane pass occupies residues 142–162 (ILLGCGVGFANQAVPLFLSEI). Topologically, residues 163–168 (APTRIR) are cytoplasmic. The helical transmembrane segment at 169-189 (GGLNILFQLNVTIGILFANLV) threads the bilayer. Residues 190–203 (NYGTAKIKGGWGWR) are Extracellular-facing. Residues 204 to 224 (LSLGLAGIPALLLTVGALLVT) form a helical membrane-spanning segment. At 225-296 (ETPNSLVERG…IAVALQIFQQ (72 aa)) the chain is on the cytoplasmic side. A helical transmembrane segment spans residues 297–317 (CTGINAIMFYAPVLFSTLGFG). Topologically, residues 318–319 (SD) are extracellular. A helical membrane pass occupies residues 320-340 (ASLYSAVVTGAVNVLSTLVSI). The Cytoplasmic segment spans residues 341–349 (YSVDKVGRR). A helical transmembrane segment spans residues 350-370 (VLLLEAGVQMFFSQVVIAIIL). Residues 371–383 (GVKVTDTSTNLSK) lie on the Extracellular side of the membrane. Residues 384-404 (GFAILVVVMICTYVAAFAWSW) form a helical membrane-spanning segment. Residues 405-426 (GPLGWLIPSETFPLETRSAGQS) lie on the Cytoplasmic side of the membrane. The chain crosses the membrane as a helical span at residues 427 to 447 (VTVCVNLLFTFIIAQAFLSML). At 448–451 (CHFK) the chain is on the extracellular side. Residues 452–472 (FGIFIFFSAWVLIMSVFVMFL) form a helical membrane-spanning segment. Residues 473-526 (LPETKNIPIEEMTERVWKKHWFWARFMDDHNDHEFVNGEKSNGKSNGFDPSTRL) are Cytoplasmic-facing.

The protein belongs to the major facilitator superfamily. Sugar transporter (TC 2.A.1.1) family.

Its subcellular location is the cell membrane. In terms of biological role, mediates an active uptake of hexoses, probably by sugar/hydrogen symport. The protein is Sugar transport protein 13 (STP13) of Arabidopsis thaliana (Mouse-ear cress).